The following is a 434-amino-acid chain: Tol-Pal system protein TolB (434 aa).

The N-terminal stretch at 1–24 (MKFSAYLTTLFIVLFSLFIQTVQA) is a signal peptide.

This sequence belongs to the TolB family. As to quaternary structure, the Tol-Pal system is composed of five core proteins: the inner membrane proteins TolA, TolQ and TolR, the periplasmic protein TolB and the outer membrane protein Pal. They form a network linking the inner and outer membranes and the peptidoglycan layer.

It localises to the periplasm. In terms of biological role, part of the Tol-Pal system, which plays a role in outer membrane invagination during cell division and is important for maintaining outer membrane integrity. In Histophilus somni (strain 129Pt) (Haemophilus somnus), this protein is Tol-Pal system protein TolB.